We begin with the raw amino-acid sequence, 96 residues long: Acetolactate synthase isozyme 1 small subunit (96 aa).

One can recognise an ACT domain in the interval 10–83; sequence ILELTVRNHP…DVVKVQRNQS (74 aa).

Belongs to the acetolactate synthase small subunit family. As to quaternary structure, dimer of large and small chains.

The enzyme catalyses 2 pyruvate + H(+) = (2S)-2-acetolactate + CO2. It participates in amino-acid biosynthesis; L-isoleucine biosynthesis; L-isoleucine from 2-oxobutanoate: step 1/4. Its pathway is amino-acid biosynthesis; L-valine biosynthesis; L-valine from pyruvate: step 1/4. The protein is Acetolactate synthase isozyme 1 small subunit (ilvN) of Escherichia coli O157:H7.